Here is a 713-residue protein sequence, read N- to C-terminus: Ribosomal RNA large subunit methyltransferase K/L (713 aa).

Residues 43–154 form the THUMP domain; it reads LLYRALLWSR…RDQVMLSLDL (112 aa).

It belongs to the methyltransferase superfamily. RlmKL family.

The protein localises to the cytoplasm. The catalysed reaction is guanosine(2445) in 23S rRNA + S-adenosyl-L-methionine = N(2)-methylguanosine(2445) in 23S rRNA + S-adenosyl-L-homocysteine + H(+). The enzyme catalyses guanosine(2069) in 23S rRNA + S-adenosyl-L-methionine = N(2)-methylguanosine(2069) in 23S rRNA + S-adenosyl-L-homocysteine + H(+). In terms of biological role, specifically methylates the guanine in position 2445 (m2G2445) and the guanine in position 2069 (m7G2069) of 23S rRNA. The chain is Ribosomal RNA large subunit methyltransferase K/L from Sodalis glossinidius (strain morsitans).